The sequence spans 402 residues: Type II NADH:quinone oxidoreductase (402 aa).

FAD contacts are provided by residues 12-16 (GAGYA), 39-40 (NK), and Val83. Residue Glu172 is part of the active site. FAD contacts are provided by residues Asp302, 319-320 (AQ), and Lys379.

The protein belongs to the NADH dehydrogenase family. Requires FAD as cofactor.

The protein resides in the cell membrane. The catalysed reaction is a quinone + NADH + H(+) = a quinol + NAD(+). Alternative, nonproton pumping NADH:quinone oxidoreductase that delivers electrons to the respiratory chain by oxidation of NADH and reduction of quinones, and contributes to the regeneration of NAD(+). The polypeptide is Type II NADH:quinone oxidoreductase (Staphylococcus aureus (strain bovine RF122 / ET3-1)).